We begin with the raw amino-acid sequence, 228 residues long: Mitochondrial assembly of ribosomal large subunit protein 1 (228 aa).

Residues 53 to 77 are disordered; sequence SLTRGLHHGPQPEERTAGDARLQPG.

This sequence belongs to the Iojap/RsfS family. As to quaternary structure, associates with the mitochondrial ribosome large subunit (39S) via interaction with MRPL12 and/or MRPL14. The interaction generates steric hindrance that is expected to prevent premature association of the 28S and 39S ribosomal subunits. Identified in a complex composed of MALSU1, MIEF1 upstream open reading frame protein and NDUFAB1; within the trimeric complex, MIEF1 upstream open reading frame protein functions as a bridging scaffold that interacts with MALSU1 on one side, and with NDUFAB1 on the other side. Interacts with MRPL12 and MRPL14.

The protein localises to the mitochondrion matrix. Functionally, required for normal mitochondrial ribosome function and mitochondrial translation. May play a role in ribosome biogenesis by preventing premature association of the 28S and 39S ribosomal subunits. Interacts with mitochondrial ribosomal protein uL14m (MRPL14), probably blocking formation of intersubunit bridge B8, preventing association of the 28S and 39S ribosomal subunits. Addition to isolated mitochondrial ribosomal subunits partially inhibits translation, probably by interfering with the association of the 28S and 39S ribosomal subunits and the formation of functional ribosomes. May also participate in the assembly and/or regulation of the stability of the large subunit of the mitochondrial ribosome. May function as a ribosomal silencing factor. The sequence is that of Mitochondrial assembly of ribosomal large subunit protein 1 (Malsu1) from Mus musculus (Mouse).